A 413-amino-acid polypeptide reads, in one-letter code: Histidinol-phosphate aminotransferase, chloroplastic (413 aa).

Residues 1–35 constitute a chloroplast transit peptide; that stretch reads MGVIELCNTSSICIGRAKPSCCSIERNQRRRIICM. An N6-(pyridoxal phosphate)lysine modification is found at K273.

Belongs to the class-II pyridoxal-phosphate-dependent aminotransferase family. Histidinol-phosphate aminotransferase subfamily. In terms of assembly, homodimer. Pyridoxal 5'-phosphate is required as a cofactor. As to expression, mainly expressed in green tissues.

The protein localises to the plastid. It localises to the chloroplast. The catalysed reaction is L-histidinol phosphate + 2-oxoglutarate = 3-(imidazol-4-yl)-2-oxopropyl phosphate + L-glutamate. Its pathway is amino-acid biosynthesis; L-histidine biosynthesis; L-histidine from 5-phospho-alpha-D-ribose 1-diphosphate: step 7/9. This Nicotiana tabacum (Common tobacco) protein is Histidinol-phosphate aminotransferase, chloroplastic (HPA).